We begin with the raw amino-acid sequence, 188 residues long: MKALKERILRDGKCFEGGILKVDNFINHQMDPILMKSIAVEFVRRFASTNINKVMTIEASGIAPAIMVGYLLELPVVFAKKKKPVTMENMLTTSVYSFTKDRSYDVCVSKDFLSKGDRVLFIDDFLANGNAAKGIIDLVEKAGAELSGMGFIIEKAFQHGGDYLRNAGIRVESLAIIESLDNCEIKIR.

Residues Leu20 and Asn27 each coordinate xanthine. 127-131 (ANGNA) serves as a coordination point for 5-phospho-alpha-D-ribose 1-diphosphate. Lys155 is a xanthine binding site.

The protein belongs to the purine/pyrimidine phosphoribosyltransferase family. Xpt subfamily. As to quaternary structure, homodimer.

It is found in the cytoplasm. The catalysed reaction is XMP + diphosphate = xanthine + 5-phospho-alpha-D-ribose 1-diphosphate. Its pathway is purine metabolism; XMP biosynthesis via salvage pathway; XMP from xanthine: step 1/1. In terms of biological role, converts the preformed base xanthine, a product of nucleic acid breakdown, to xanthosine 5'-monophosphate (XMP), so it can be reused for RNA or DNA synthesis. This Phocaeicola vulgatus (strain ATCC 8482 / DSM 1447 / JCM 5826 / CCUG 4940 / NBRC 14291 / NCTC 11154) (Bacteroides vulgatus) protein is Xanthine phosphoribosyltransferase.